Here is a 291-residue protein sequence, read N- to C-terminus: 4-hydroxy-tetrahydrodipicolinate synthase (291 aa).

Residue Thr-44 coordinates pyruvate. Tyr-132 acts as the Proton donor/acceptor in catalysis. Lys-160 serves as the catalytic Schiff-base intermediate with substrate. Ile-202 contributes to the pyruvate binding site.

Belongs to the DapA family. As to quaternary structure, homotetramer; dimer of dimers.

Its subcellular location is the cytoplasm. The catalysed reaction is L-aspartate 4-semialdehyde + pyruvate = (2S,4S)-4-hydroxy-2,3,4,5-tetrahydrodipicolinate + H2O + H(+). It functions in the pathway amino-acid biosynthesis; L-lysine biosynthesis via DAP pathway; (S)-tetrahydrodipicolinate from L-aspartate: step 3/4. Catalyzes the condensation of (S)-aspartate-beta-semialdehyde [(S)-ASA] and pyruvate to 4-hydroxy-tetrahydrodipicolinate (HTPA). The chain is 4-hydroxy-tetrahydrodipicolinate synthase from Rhizorhabdus wittichii (strain DSM 6014 / CCUG 31198 / JCM 15750 / NBRC 105917 / EY 4224 / RW1) (Sphingomonas wittichii).